A 290-amino-acid polypeptide reads, in one-letter code: MKRIKCNKVRTVTEIVNSDEKIQKTYELAEFDLKNLSSLESYETLKIKLALSKYMAMLSTLEMTQPLLEIFRNKADTRQIAAVVFSTLAFIHNRFHPLVTNFTNKMEFVVTETNDTSIPGEPILFTENEGVLLCSVDRPSIVKMLSREFDTEALVNFENDNCNVRIAKTFGASKRKNTTRSDDYESNKQPNYDMDLSDFSITEVEATQYLTLLLTVEHAYLHYYIFKNYGVFEYCKSLTDHSLFTNKLRSTMSTKTSNLLLSKFKFTIEDFDKINSNSVTSGFNIYNFNK.

This sequence belongs to the baculoviridae E27 family. As to quaternary structure, interacts with host mus209/PCNA, cdc2 and cdk6. Forms a complex with proteins C42 and p78/83.

The protein localises to the virion membrane. In terms of biological role, acts as a cyclin-like protein and plays a role in the modulation of host cell cycle. May promote G2/S arrest by interacting with host mus209/PCNA, cdc2 and cdk6. The cell cycle arrest is characterized by an intact nuclear envelope, concomitant with sustained activity of host cdc2. However, viral DNA replication still occurs in the arrested cells. The polypeptide is Occlusion-derived virus envelope protein E27 (E27) (Lepidoptera (butterflies and moths)).